The following is a 247-amino-acid chain: 1-(5-phosphoribosyl)-5-[(5-phosphoribosylamino)methylideneamino] imidazole-4-carboxamide isomerase 1 (247 aa).

Glu-8 serves as the catalytic Proton acceptor. The active-site Proton donor is Asp-128.

Belongs to the HisA/HisF family.

The protein localises to the cytoplasm. The catalysed reaction is 1-(5-phospho-beta-D-ribosyl)-5-[(5-phospho-beta-D-ribosylamino)methylideneamino]imidazole-4-carboxamide = 5-[(5-phospho-1-deoxy-D-ribulos-1-ylimino)methylamino]-1-(5-phospho-beta-D-ribosyl)imidazole-4-carboxamide. It functions in the pathway amino-acid biosynthesis; L-histidine biosynthesis; L-histidine from 5-phospho-alpha-D-ribose 1-diphosphate: step 4/9. This Ruegeria sp. (strain TM1040) (Silicibacter sp.) protein is 1-(5-phosphoribosyl)-5-[(5-phosphoribosylamino)methylideneamino] imidazole-4-carboxamide isomerase 1.